Consider the following 177-residue polypeptide: ATP synthase subunit delta (177 aa).

It belongs to the ATPase delta chain family. As to quaternary structure, F-type ATPases have 2 components, F(1) - the catalytic core - and F(0) - the membrane proton channel. F(1) has five subunits: alpha(3), beta(3), gamma(1), delta(1), epsilon(1). F(0) has three main subunits: a(1), b(2) and c(10-14). The alpha and beta chains form an alternating ring which encloses part of the gamma chain. F(1) is attached to F(0) by a central stalk formed by the gamma and epsilon chains, while a peripheral stalk is formed by the delta and b chains.

Its subcellular location is the cell inner membrane. In terms of biological role, f(1)F(0) ATP synthase produces ATP from ADP in the presence of a proton or sodium gradient. F-type ATPases consist of two structural domains, F(1) containing the extramembraneous catalytic core and F(0) containing the membrane proton channel, linked together by a central stalk and a peripheral stalk. During catalysis, ATP synthesis in the catalytic domain of F(1) is coupled via a rotary mechanism of the central stalk subunits to proton translocation. Functionally, this protein is part of the stalk that links CF(0) to CF(1). It either transmits conformational changes from CF(0) to CF(1) or is implicated in proton conduction. This Colwellia psychrerythraea (strain 34H / ATCC BAA-681) (Vibrio psychroerythus) protein is ATP synthase subunit delta.